Consider the following 220-residue polypeptide: Superoxide dismutase [Cu-Zn], chloroplastic (220 aa).

A chloroplast-targeting transit peptide spans 1–66; it reads MAAHCILFSS…AAPKPLTVFA (66 aa). Cu cation-binding residues include His-112, His-114, and His-129. Cys-123 and Cys-212 form a disulfide bridge. His-129, His-137, His-146, and Asp-149 together coordinate Zn(2+). Cu cation is bound at residue His-186.

It belongs to the Cu-Zn superoxide dismutase family. In terms of assembly, homotetramer. The cofactor is Cu cation. Zn(2+) serves as cofactor.

It localises to the plastid. Its subcellular location is the chloroplast. The enzyme catalyses 2 superoxide + 2 H(+) = H2O2 + O2. Its function is as follows. Destroys radicals which are normally produced within the cells and which are toxic to biological systems. In Solidago canadensis var. scabra (Tall goldenrod), this protein is Superoxide dismutase [Cu-Zn], chloroplastic (SODCP).